We begin with the raw amino-acid sequence, 400 residues long: 1-deoxy-D-xylulose 5-phosphate reductoisomerase (400 aa).

NADPH contacts are provided by T10, G11, S12, I13, G36, N38, and N124. A 1-deoxy-D-xylulose 5-phosphate-binding site is contributed by K125. E126 lines the NADPH pocket. D150 lines the Mn(2+) pocket. 1-deoxy-D-xylulose 5-phosphate contacts are provided by S151, E152, S186, and H209. E152 provides a ligand contact to Mn(2+). G215 provides a ligand contact to NADPH. Residues S222, N227, K228, and E231 each coordinate 1-deoxy-D-xylulose 5-phosphate. A Mn(2+)-binding site is contributed by E231.

Belongs to the DXR family. It depends on Mg(2+) as a cofactor. Requires Mn(2+) as cofactor.

The catalysed reaction is 2-C-methyl-D-erythritol 4-phosphate + NADP(+) = 1-deoxy-D-xylulose 5-phosphate + NADPH + H(+). Its pathway is isoprenoid biosynthesis; isopentenyl diphosphate biosynthesis via DXP pathway; isopentenyl diphosphate from 1-deoxy-D-xylulose 5-phosphate: step 1/6. In terms of biological role, catalyzes the NADPH-dependent rearrangement and reduction of 1-deoxy-D-xylulose-5-phosphate (DXP) to 2-C-methyl-D-erythritol 4-phosphate (MEP). The chain is 1-deoxy-D-xylulose 5-phosphate reductoisomerase from Aliivibrio salmonicida (strain LFI1238) (Vibrio salmonicida (strain LFI1238)).